The chain runs to 510 residues: Mitogen-activated protein kinase 9 (510 aa).

In terms of domain architecture, Protein kinase spans 23 to 314 (YQIQEVIGKG…AEEALADPYF (292 aa)). Residues 29 to 37 (IGKGSYGVV) and lysine 52 contribute to the ATP site. Catalysis depends on aspartate 149, which acts as the Proton acceptor. A Phosphothreonine modification is found at threonine 185. Residues 185–187 (TDY) carry the TXY motif. Tyrosine 187 is modified (phosphotyrosine). At threonine 190 the chain carries Phosphothreonine. Residues 393-461 (NYGKGEKGSP…SDYRNGTSQT (69 aa)) are disordered. Over residues 410-431 (LPRERVPAPKKENGSHNHDIEN) the composition is skewed to basic and acidic residues. Residues 433-461 (SIASLVTTLESPPTSQHEGSDYRNGTSQT) show a composition bias toward polar residues.

Belongs to the protein kinase superfamily. CMGC Ser/Thr protein kinase family. MAP kinase subfamily. In terms of processing, dually phosphorylated on Thr-185 and Tyr-187, which activates the enzyme.

The enzyme catalyses L-seryl-[protein] + ATP = O-phospho-L-seryl-[protein] + ADP + H(+). It catalyses the reaction L-threonyl-[protein] + ATP = O-phospho-L-threonyl-[protein] + ADP + H(+). With respect to regulation, activated by threonine and tyrosine phosphorylation. This Arabidopsis thaliana (Mouse-ear cress) protein is Mitogen-activated protein kinase 9 (MPK9).